Consider the following 544-residue polypeptide: Bacillolysin (544 aa).

The signal sequence occupies residues 1 to 25 (MNKRAMLGAIGLAFGLMAWPFGASA). Positions 26-225 (KGKSMVWNEQ…DEAKPGGAQP (200 aa)) are cleaved as a propeptide — activation peptide. Positions 285, 287, 289, and 366 each coordinate Ca(2+). Histidine 370 provides a ligand contact to Zn(2+). The active site involves glutamate 371. Zn(2+)-binding residues include histidine 374 and glutamate 394. Residues glutamate 405, asparagine 411, aspartate 413, glutamate 415, glutamate 418, tyrosine 421, threonine 422, valine 425, and aspartate 428 each coordinate Ca(2+). The active-site Proton donor is histidine 459.

Belongs to the peptidase M4 family. The cofactor is Ca(2+). Requires Zn(2+) as cofactor.

The protein localises to the secreted. It catalyses the reaction Similar, but not identical, to that of thermolysin.. In terms of biological role, extracellular zinc metalloprotease. The protein is Bacillolysin (npr) of Bacillus caldolyticus.